A 531-amino-acid chain; its full sequence is Splicing factor ESS-2 (531 aa).

Disordered regions lie at residues 104-163 (RTPI…RKKK) and 453-531 (PFAS…GDFF). Over residues 105 to 114 (TPITTRSTTE) the composition is skewed to polar residues. Composition is skewed to low complexity over residues 125–136 (TPGPSSASTSSA) and 464–477 (SRPS…TPGS). The span at 480–498 (SRGSTTPGSSWSQGAQTPG) shows a compositional bias: polar residues.

Belongs to the ESS2 family.

It localises to the nucleus. Regulates pre-mRNA splicing. This is Splicing factor ESS-2 (ess-2) from Caenorhabditis elegans.